We begin with the raw amino-acid sequence, 380 residues long: Queuine tRNA-ribosyltransferase (380 aa).

Residue aspartate 96 is the Proton acceptor of the active site. Substrate contacts are provided by residues 96–100 (DSGGF), aspartate 150, glutamine 193, and glycine 220. Residues 251-257 (GVGAPDS) form an RNA binding region. The active-site Nucleophile is the aspartate 270. The RNA binding; important for wobble base 34 recognition stretch occupies residues 275-279 (TRIAR). Residues cysteine 308, cysteine 310, cysteine 313, and histidine 339 each contribute to the Zn(2+) site.

This sequence belongs to the queuine tRNA-ribosyltransferase family. Homodimer. Within each dimer, one monomer is responsible for RNA recognition and catalysis, while the other monomer binds to the replacement base PreQ1. Zn(2+) serves as cofactor.

It carries out the reaction 7-aminomethyl-7-carbaguanine + guanosine(34) in tRNA = 7-aminomethyl-7-carbaguanosine(34) in tRNA + guanine. It functions in the pathway tRNA modification; tRNA-queuosine biosynthesis. Catalyzes the base-exchange of a guanine (G) residue with the queuine precursor 7-aminomethyl-7-deazaguanine (PreQ1) at position 34 (anticodon wobble position) in tRNAs with GU(N) anticodons (tRNA-Asp, -Asn, -His and -Tyr). Catalysis occurs through a double-displacement mechanism. The nucleophile active site attacks the C1' of nucleotide 34 to detach the guanine base from the RNA, forming a covalent enzyme-RNA intermediate. The proton acceptor active site deprotonates the incoming PreQ1, allowing a nucleophilic attack on the C1' of the ribose to form the product. After dissociation, two additional enzymatic reactions on the tRNA convert PreQ1 to queuine (Q), resulting in the hypermodified nucleoside queuosine (7-(((4,5-cis-dihydroxy-2-cyclopenten-1-yl)amino)methyl)-7-deazaguanosine). The polypeptide is Queuine tRNA-ribosyltransferase (Streptococcus pyogenes serotype M6 (strain ATCC BAA-946 / MGAS10394)).